Consider the following 554-residue polypeptide: (+)-delta-cadinene synthase isozyme XC14 (554 aa).

The segment covering 1-16 has biased composition (low complexity); the sequence is MASQVSQMPSSSPLSS. The disordered stretch occupies residues 1–23; sequence MASQVSQMPSSSPLSSNKDEMRP. Positions 307, 311, and 451 each coordinate Mg(2+). The DDXXD motif motif lies at 307 to 311; that stretch reads DDTYD.

This sequence belongs to the terpene synthase family. The cofactor is Mg(2+).

It catalyses the reaction (2E,6E)-farnesyl diphosphate = (1S,8aR)-delta-cadinene + diphosphate. The protein operates within secondary metabolite biosynthesis; terpenoid biosynthesis. Its function is as follows. Responsible for the cyclization of trans,trans-farnesyl diphosphate (FPP) to (+)-delta cadinene. The chain is (+)-delta-cadinene synthase isozyme XC14 from Gossypium arboreum (Tree cotton).